The chain runs to 256 residues: Cytochrome c-type biogenesis protein CcmE homolog, mitochondrial (256 aa).

Residues Met1 to Leu57 constitute a mitochondrion transit peptide. The helical transmembrane segment at Leu84–Gln106 threads the bilayer. His222 and Tyr226 together coordinate heme.

Belongs to the CcmE/CycJ family.

The protein localises to the mitochondrion inner membrane. The protein resides in the mitochondrion intermembrane space. Heme-binding chaperone that may be involved in cytochrome c maturation in mitochondria. This is Cytochrome c-type biogenesis protein CcmE homolog, mitochondrial from Arabidopsis thaliana (Mouse-ear cress).